The chain runs to 256 residues: Trans-aconitate 2-methyltransferase (256 aa).

The protein belongs to the methyltransferase superfamily. Tam family.

It is found in the cytoplasm. It catalyses the reaction trans-aconitate + S-adenosyl-L-methionine = (E)-3-(methoxycarbonyl)pent-2-enedioate + S-adenosyl-L-homocysteine. In terms of biological role, catalyzes the S-adenosylmethionine monomethyl esterification of trans-aconitate. This chain is Trans-aconitate 2-methyltransferase, found in Rhizobium rhizogenes (strain K84 / ATCC BAA-868) (Agrobacterium radiobacter).